A 382-amino-acid chain; its full sequence is Saccharopine dehydrogenase [NAD(+), L-lysine-forming] (382 aa).

L-saccharopine is bound by residues R20 and K79. K79 serves as the catalytic Proton acceptor. Residue H98 is the Proton donor of the active site. Q103 is a binding site for L-saccharopine. Residue R132 participates in NAD(+) binding. L-saccharopine-binding residues include R133 and F137. Residues 215 to 216 (GR), D239, T243, Y263, and V290 contribute to the NAD(+) site. Residues C217 and C261 are joined by a disulfide bond. 291–293 (SAD) is an L-saccharopine binding site. NAD(+) is bound at residue 330–333 (IDHL).

It belongs to the AlaDH/PNT family. As to quaternary structure, monomer.

It catalyses the reaction L-saccharopine + NAD(+) + H2O = L-lysine + 2-oxoglutarate + NADH + H(+). The protein operates within amino-acid biosynthesis; L-lysine biosynthesis via AAA pathway; L-lysine from L-alpha-aminoadipate (fungal route): step 3/3. Functionally, catalyzes the NAD(+)-dependent cleavage of saccharopine to L-lysine and 2-oxoglutarate, the final step in the alpha-aminoadipate (AAA) pathway for lysin biosynthesis. This is Saccharopine dehydrogenase [NAD(+), L-lysine-forming] from Candida albicans (strain SC5314 / ATCC MYA-2876) (Yeast).